The sequence spans 141 residues: Nucleoside diphosphate kinase (141 aa).

The ATP site is built by Lys-11, Phe-59, Arg-87, Thr-93, Arg-104, and Asn-114. The active-site Pros-phosphohistidine intermediate is the His-117.

Belongs to the NDK family. As to quaternary structure, homotetramer. It depends on Mg(2+) as a cofactor.

Its subcellular location is the cytoplasm. It catalyses the reaction a 2'-deoxyribonucleoside 5'-diphosphate + ATP = a 2'-deoxyribonucleoside 5'-triphosphate + ADP. It carries out the reaction a ribonucleoside 5'-diphosphate + ATP = a ribonucleoside 5'-triphosphate + ADP. In terms of biological role, major role in the synthesis of nucleoside triphosphates other than ATP. The ATP gamma phosphate is transferred to the NDP beta phosphate via a ping-pong mechanism, using a phosphorylated active-site intermediate. This chain is Nucleoside diphosphate kinase, found in Polaromonas sp. (strain JS666 / ATCC BAA-500).